Reading from the N-terminus, the 416-residue chain is CinA-like protein (416 aa).

The protein belongs to the CinA family.

This chain is CinA-like protein, found in Trichormus variabilis (strain ATCC 29413 / PCC 7937) (Anabaena variabilis).